A 123-amino-acid chain; its full sequence is Homeobox protein CDX-1 (123 aa).

Residues 5–64 (KDKYRVVYTDHQRLELEKEFHYSRYITIRRKSELAANLGLTERQVKIWFQNRRAKERKVN) constitute a DNA-binding region (homeobox). Residues 8–29 (YRVVYTDHQRLELEKEFHYSRY) form an interaction with DNA region. An interaction with 5-mCpG DNA region spans residues 47 to 58 (RQVKIWFQNRRA). A compositionally biased stretch (basic residues) spans 57-68 (RAKERKVNKKKQ). A disordered region spans residues 57 to 123 (RAKERKVNKK…PVPVKEEFLP (67 aa)).

This sequence belongs to the Caudal homeobox family. As to expression, intestinal epithelium.

The protein resides in the nucleus. Plays a role in transcriptional regulation. Involved in activated KRAS-mediated transcriptional activation of PRKD1 in colorectal cancer (CRC) cells. Binds to the PRKD1 promoter in colorectal cancer (CRC) cells. Could play a role in the terminal differentiation of the intestine. Binds preferentially to methylated DNA. This chain is Homeobox protein CDX-1 (Cdx1), found in Rattus norvegicus (Rat).